A 648-amino-acid chain; its full sequence is DNA polymerase (648 aa).

This sequence belongs to the DNA polymerase type-A family.

The catalysed reaction is DNA(n) + a 2'-deoxyribonucleoside 5'-triphosphate = DNA(n+1) + diphosphate. Functionally, replicates the viral genomic DNA. This polymerase possesses two enzymatic activities: DNA synthesis (polymerase) and an exonucleolytic activity that degrades single-stranded DNA in the 3'-5' direction. The polypeptide is DNA polymerase (L) (Bacillus subtilis (Bacteriophage SP02)).